We begin with the raw amino-acid sequence, 395 residues long: Probable sugar efflux transporter (395 aa).

The next 12 membrane-spanning stretches (helical) occupy residues V13–L33, V48–L68, I82–L102, I107–L127, A134–L154, F168–V188, P207–Y227, F244–S264, A272–L292, W297–M317, V331–G351, and I363–V383.

It belongs to the major facilitator superfamily. SotB (TC 2.A.1.2) family.

Its subcellular location is the cell inner membrane. Its function is as follows. Involved in the efflux of sugars. The physiological role may be the reduction of the intracellular concentration of toxic sugars or sugar metabolites. This is Probable sugar efflux transporter from Pectobacterium atrosepticum (strain SCRI 1043 / ATCC BAA-672) (Erwinia carotovora subsp. atroseptica).